Here is a 494-residue protein sequence, read N- to C-terminus: Maintenance of mitochondrial morphology protein 1 (494 aa).

The Lumenal segment spans residues 1 to 22 (MSSQPGDPATLPAQSSLSFTQG). A helical transmembrane segment spans residues 23-43 (FLLGQLSVVLVLAAFIKFFIF). Topologically, residues 44–494 (GEAPPPPSRG…GSLPEAVTPG (451 aa)) are cytoplasmic. Disordered stretches follow at residues 50–98 (PSRG…SSST), 274–330 (PPLD…KSNV), 398–426 (VRTG…ARHE), and 449–494 (VASR…VTPG). Residues 54-64 (LSHRSATHRRS) are compositionally biased toward basic residues. Polar residues-rich tracts occupy residues 65–76 (NSIYSNSPQEAG) and 85–98 (STSN…SSST). One can recognise an SMP-LTD domain in the interval 130–387 (QPESLDWFNV…EPRVQVVGLP (258 aa)). Residues 274–286 (PPLDTPSHSPSPP) are compositionally biased toward pro residues. Polar residues-rich tracts occupy residues 406–416 (TASNGPRSTVS) and 466–477 (RSMTRQESSGDL).

The protein belongs to the MMM1 family. Homodimer. Component of the ER-mitochondria encounter structure (ERMES) or MDM complex, composed of mmm1, mdm10, mdm12 and mdm34. A mmm1 homodimer associates with one molecule of mdm12 on each side in a pairwise head-to-tail manner, and the SMP-LTD domains of mmm1 and mdm12 generate a continuous hydrophobic tunnel for phospholipid trafficking.

The protein localises to the endoplasmic reticulum membrane. Its function is as follows. Component of the ERMES/MDM complex, which serves as a molecular tether to connect the endoplasmic reticulum (ER) and mitochondria. Components of this complex are involved in the control of mitochondrial shape and protein biogenesis, and function in nonvesicular lipid trafficking between the ER and mitochondria. The mdm12-mmm1 subcomplex functions in the major beta-barrel assembly pathway that is responsible for biogenesis of all outer membrane beta-barrel proteins, and acts in a late step after the SAM complex. The mdm10-mdm12-mmm1 subcomplex further acts in the TOM40-specific pathway after the action of the mdm12-mmm1 complex. Essential for establishing and maintaining the structure of mitochondria and maintenance of mtDNA nucleoids. The chain is Maintenance of mitochondrial morphology protein 1 from Aspergillus clavatus (strain ATCC 1007 / CBS 513.65 / DSM 816 / NCTC 3887 / NRRL 1 / QM 1276 / 107).